A 1511-amino-acid polypeptide reads, in one-letter code: DNA-directed RNA polymerase subunit beta' (1511 aa).

The Zn(2+) site is built by Cys75, Cys77, Cys90, and Cys93. 3 residues coordinate Mg(2+): Asp474, Asp476, and Asp478. The Zn(2+) site is built by Cys804, Cys878, Cys885, and Cys888.

This sequence belongs to the RNA polymerase beta' chain family. In terms of assembly, the RNAP catalytic core consists of 2 alpha, 1 beta, 1 beta' and 1 omega subunit. When a sigma factor is associated with the core the holoenzyme is formed, which can initiate transcription. Requires Mg(2+) as cofactor. It depends on Zn(2+) as a cofactor.

The catalysed reaction is RNA(n) + a ribonucleoside 5'-triphosphate = RNA(n+1) + diphosphate. Functionally, DNA-dependent RNA polymerase catalyzes the transcription of DNA into RNA using the four ribonucleoside triphosphates as substrates. This Aliarcobacter butzleri (strain RM4018) (Arcobacter butzleri) protein is DNA-directed RNA polymerase subunit beta'.